Here is a 180-residue protein sequence, read N- to C-terminus: Large ribosomal subunit protein uL6 (180 aa).

It belongs to the universal ribosomal protein uL6 family. Part of the 50S ribosomal subunit.

Its function is as follows. This protein binds to the 23S rRNA, and is important in its secondary structure. It is located near the subunit interface in the base of the L7/L12 stalk, and near the tRNA binding site of the peptidyltransferase center. This is Large ribosomal subunit protein uL6 from Borreliella burgdorferi (strain ATCC 35210 / DSM 4680 / CIP 102532 / B31) (Borrelia burgdorferi).